We begin with the raw amino-acid sequence, 703 residues long: Fanconi-associated nuclease 1 homolog (703 aa).

E529, D651, E666, and V667 together coordinate Mn(2+). The VRR-NUC domain maps to Y597–S698.

The protein belongs to the FAN1 family. Mn(2+) is required as a cofactor. The cofactor is Mg(2+).

Its subcellular location is the nucleus. The enzyme catalyses Hydrolytically removes 5'-nucleotides successively from the 3'-hydroxy termini of 3'-hydroxy-terminated oligonucleotides.. In terms of biological role, nuclease required for the repair of DNA interstrand cross-links (ICL). Acts as a 5'-3' exonuclease that anchors at a cut end of DNA and cleaves DNA successively at every third nucleotide, allowing to excise an ICL from one strand through flanking incisions. The sequence is that of Fanconi-associated nuclease 1 homolog from Schizosaccharomyces pombe (strain 972 / ATCC 24843) (Fission yeast).